Reading from the N-terminus, the 71-residue chain is DNA-directed RNA polymerases II, IV and V subunit 10 (71 aa).

Zn(2+)-binding residues include Cys7, Cys10, Cys44, and Cys45.

This sequence belongs to the archaeal Rpo10/eukaryotic RPB10 RNA polymerase subunit family. In terms of assembly, component of the RNA polymerase II, IV and V complexes. Interacts with NRPD1.

The protein localises to the nucleus. Functionally, DNA-dependent RNA polymerase catalyzes the transcription of DNA into RNA using the four ribonucleoside triphosphates as substrates. Component of RNA polymerase II which synthesizes mRNA precursors and many functional non-coding RNAs. Pol II is the central component of the basal RNA polymerase II transcription machinery. It is composed of mobile elements that move relative to each other. Component of RNA polymerases IV and V which mediate short-interfering RNAs (siRNA) accumulation and subsequent RNA-directed DNA methylation-dependent (RdDM) transcriptional gene silencing (TGS) of endogenous repeated sequences, including transposable elements. The chain is DNA-directed RNA polymerases II, IV and V subunit 10 (NRPB10) from Arabidopsis thaliana (Mouse-ear cress).